Here is a 199-residue protein sequence, read N- to C-terminus: Cytochrome c oxidase subunit 2 (199 aa).

A helical membrane pass occupies residues 1–13; sequence AICSLVLYLLTLM. The Mitochondrial matrix segment spans residues 14–26; the sequence is LMEKLSSNTVDAQ. The helical transmembrane segment at 27-54 threads the bilayer; it reads EVELIWTILPAIVLILLALPSLQILYMM. The Mitochondrial intermembrane portion of the chain corresponds to 55–199; that stretch reads DEIDEPDLTL…SSLLSISSSL (145 aa). The Cu cation site is built by His128, Cys163, Glu165, Cys167, His171, and Met174. Glu165 is a Mg(2+) binding site.

This sequence belongs to the cytochrome c oxidase subunit 2 family. Component of the cytochrome c oxidase (complex IV, CIV), a multisubunit enzyme composed of 14 subunits. The complex is composed of a catalytic core of 3 subunits MT-CO1, MT-CO2 and MT-CO3, encoded in the mitochondrial DNA, and 11 supernumerary subunits COX4I, COX5A, COX5B, COX6A, COX6B, COX6C, COX7A, COX7B, COX7C, COX8 and NDUFA4, which are encoded in the nuclear genome. The complex exists as a monomer or a dimer and forms supercomplexes (SCs) in the inner mitochondrial membrane with NADH-ubiquinone oxidoreductase (complex I, CI) and ubiquinol-cytochrome c oxidoreductase (cytochrome b-c1 complex, complex III, CIII), resulting in different assemblies (supercomplex SCI(1)III(2)IV(1) and megacomplex MCI(2)III(2)IV(2)). Found in a complex with TMEM177, COA6, COX18, COX20, SCO1 and SCO2. Interacts with TMEM177 in a COX20-dependent manner. Interacts with COX20. Interacts with COX16. It depends on Cu cation as a cofactor.

The protein localises to the mitochondrion inner membrane. The catalysed reaction is 4 Fe(II)-[cytochrome c] + O2 + 8 H(+)(in) = 4 Fe(III)-[cytochrome c] + 2 H2O + 4 H(+)(out). Component of the cytochrome c oxidase, the last enzyme in the mitochondrial electron transport chain which drives oxidative phosphorylation. The respiratory chain contains 3 multisubunit complexes succinate dehydrogenase (complex II, CII), ubiquinol-cytochrome c oxidoreductase (cytochrome b-c1 complex, complex III, CIII) and cytochrome c oxidase (complex IV, CIV), that cooperate to transfer electrons derived from NADH and succinate to molecular oxygen, creating an electrochemical gradient over the inner membrane that drives transmembrane transport and the ATP synthase. Cytochrome c oxidase is the component of the respiratory chain that catalyzes the reduction of oxygen to water. Electrons originating from reduced cytochrome c in the intermembrane space (IMS) are transferred via the dinuclear copper A center (CU(A)) of subunit 2 and heme A of subunit 1 to the active site in subunit 1, a binuclear center (BNC) formed by heme A3 and copper B (CU(B)). The BNC reduces molecular oxygen to 2 water molecules using 4 electrons from cytochrome c in the IMS and 4 protons from the mitochondrial matrix. This chain is Cytochrome c oxidase subunit 2 (MT-CO2), found in Casuarius bennetti (Dwarf cassowary).